A 2151-amino-acid chain; its full sequence is Protein PRR14L (2151 aa).

Composition is skewed to basic and acidic residues over residues 112-123 and 134-154; these read KRSESMEPKVFR and EPSEGAKEDPHQHSTAAEEKT. 3 disordered regions span residues 112–160, 206–225, and 314–350; these read KRSE…SQED, GTKTDNNEGHKNGNVSKDLS, and QLHGHHNEQPSSTHDSPTATSPLKENSEVSCFTSDLS. At Ser157 the chain carries Phosphoserine. Residues 322–350 are compositionally biased toward polar residues; that stretch reads QPSSTHDSPTATSPLKENSEVSCFTSDLS. Phosphoserine is present on residues Ser582 and Ser945. Residues 974 to 1017 form a disordered region; that stretch reads SNQNRPDECKSEGQSAKEMLSSDQRETVTEPHGEVNHNQKDLLV. Residues 996 to 1013 are compositionally biased toward basic and acidic residues; it reads DQRETVTEPHGEVNHNQK. Phosphoserine is present on Ser1029. Residues 1091–1103 show a composition bias toward basic and acidic residues; that stretch reads DSRSTLSRRELDA. Disordered stretches follow at residues 1091-1115, 1178-1226, 1782-1802, and 1986-2012; these read DSRSTLSRRELDAAHTGTTGQDSDF, DSHY…SCHD, TGVHSQTHTQAPPQPPAPLQD, and AACPCPQSSPPEQKEAEPEKRPKKVSQ. Polar residues predominate over residues 1178-1187; the sequence is DSHYGQQDKG. Basic and acidic residues predominate over residues 1188–1201; the sequence is TSLRETQEMTEGSR.

The polypeptide is Protein PRR14L (PRR14L) (Homo sapiens (Human)).